A 968-amino-acid chain; its full sequence is RNA polymerase-associated protein RapA (968 aa).

A Helicase ATP-binding domain is found at 164–334 (DVGRRHAPRV…FARLRLLDPN (171 aa)). An ATP-binding site is contributed by 177-184 (DEVGLGKT). Positions 280–283 (DEAH) match the DEAH box motif. The region spanning 490–662 (RVEWLMGYLT…YLASPDQTEG (173 aa)) is the Helicase C-terminal domain.

This sequence belongs to the SNF2/RAD54 helicase family. RapA subfamily. Interacts with the RNAP. Has a higher affinity for the core RNAP than for the holoenzyme. Its ATPase activity is stimulated by binding to RNAP.

Functionally, transcription regulator that activates transcription by stimulating RNA polymerase (RNAP) recycling in case of stress conditions such as supercoiled DNA or high salt concentrations. Probably acts by releasing the RNAP, when it is trapped or immobilized on tightly supercoiled DNA. Does not activate transcription on linear DNA. Probably not involved in DNA repair. This chain is RNA polymerase-associated protein RapA, found in Escherichia coli O139:H28 (strain E24377A / ETEC).